The sequence spans 577 residues: Acyl-coenzyme A synthetase ACSM1, mitochondrial (577 aa).

Residues 1-31 (MQWLMRFRTLWGIHKSFHNIHPAPSQLRCRS) constitute a mitochondrion transit peptide. Position 85 is an N6-succinyllysine (Lys-85). Position 146 is an N6-acetyllysine; alternate (Lys-146). An N6-succinyllysine; alternate modification is found at Lys-146. An N6-succinyllysine modification is found at Lys-183. The residue at position 204 (Lys-204) is an N6-acetyllysine; alternate. At Lys-204 the chain carries N6-succinyllysine; alternate. The residue at position 214 (Lys-214) is an N6-acetyllysine. An ATP-binding site is contributed by 226-234 (TSGTTGFPK). Residue Lys-237 is modified to N6-succinyllysine. An N6-acetyllysine; alternate mark is found at Lys-356 and Lys-391. 2 positions are modified to N6-succinyllysine; alternate: Lys-356 and Lys-391. Residues Asp-452 and Arg-467 each coordinate ATP. An N6-acetyllysine modification is found at Lys-531. The residue at position 538 (Lys-538) is an N6-acetyllysine; alternate. Position 538 is an N6-succinyllysine; alternate (Lys-538). At Lys-549 the chain carries N6-acetyllysine. Position 563 (Lys-563) interacts with ATP.

This sequence belongs to the ATP-dependent AMP-binding enzyme family. In terms of assembly, monomer. Mg(2+) is required as a cofactor. Mn(2+) serves as cofactor.

The protein localises to the mitochondrion matrix. The protein resides in the mitochondrion. It catalyses the reaction a medium-chain fatty acid + ATP + CoA = a medium-chain fatty acyl-CoA + AMP + diphosphate. The enzyme catalyses benzoate + ATP + CoA = benzoyl-CoA + AMP + diphosphate. It carries out the reaction (R)-lipoate + GTP + H(+) = (R)-lipoyl-GMP + diphosphate. The catalysed reaction is octanoate + ATP + CoA = octanoyl-CoA + AMP + diphosphate. It catalyses the reaction decanoate + ATP + CoA = decanoyl-CoA + AMP + diphosphate. The enzyme catalyses dodecanoate + ATP + CoA = dodecanoyl-CoA + AMP + diphosphate. It carries out the reaction tetradecanoate + ATP + CoA = tetradecanoyl-CoA + AMP + diphosphate. The catalysed reaction is hexanoate + ATP + CoA = hexanoyl-CoA + AMP + diphosphate. It catalyses the reaction butanoate + ATP + CoA = butanoyl-CoA + AMP + diphosphate. The enzyme catalyses hexadecanoate + ATP + CoA = hexadecanoyl-CoA + AMP + diphosphate. Activated by monovalent cations, such as potassium, rubidium or ammonium. Functionally, catalyzes the activation of fatty acids by CoA to produce an acyl-CoA, the first step in fatty acid metabolism. Capable of activating medium-chain fatty acids (e.g. butyric (C4) to decanoic (C10) acids), and certain carboxylate-containing xenobiotics, e.g. benzoate. Also catalyzes the activation of lipoate to lipoyl-nucleoside monophosphate. Activates lipoate with GTP at a 1000-fold higher rate than with ATP and activates both (R)- and (S)-lipoate to the respective lipoyl-GMP, with a preference for (R)-lipoate. The protein is Acyl-coenzyme A synthetase ACSM1, mitochondrial (ACSM1) of Homo sapiens (Human).